The primary structure comprises 122 residues: S-adenosylmethionine decarboxylase proenzyme (122 aa).

Ser-61 (schiff-base intermediate with substrate; via pyruvic acid) is an active-site residue. Residue Ser-61 is modified to Pyruvic acid (Ser); by autocatalysis. Catalysis depends on His-66, which acts as the Proton acceptor; for processing activity. Cys-81 serves as the catalytic Proton donor; for catalytic activity.

The protein belongs to the prokaryotic AdoMetDC family. Type 1 subfamily. As to quaternary structure, heterotetramer of two alpha and two beta chains arranged as a dimer of alpha/beta heterodimers. Pyruvate serves as cofactor. Post-translationally, is synthesized initially as an inactive proenzyme. Formation of the active enzyme involves a self-maturation process in which the active site pyruvoyl group is generated from an internal serine residue via an autocatalytic post-translational modification. Two non-identical subunits are generated from the proenzyme in this reaction, and the pyruvate is formed at the N-terminus of the alpha chain, which is derived from the carboxyl end of the proenzyme. The post-translation cleavage follows an unusual pathway, termed non-hydrolytic serinolysis, in which the side chain hydroxyl group of the serine supplies its oxygen atom to form the C-terminus of the beta chain, while the remainder of the serine residue undergoes an oxidative deamination to produce ammonia and the pyruvoyl group blocking the N-terminus of the alpha chain.

The catalysed reaction is S-adenosyl-L-methionine + H(+) = S-adenosyl 3-(methylsulfanyl)propylamine + CO2. Its pathway is amine and polyamine biosynthesis; S-adenosylmethioninamine biosynthesis; S-adenosylmethioninamine from S-adenosyl-L-methionine: step 1/1. Its function is as follows. Catalyzes the decarboxylation of S-adenosylmethionine to S-adenosylmethioninamine (dcAdoMet), the propylamine donor required for the synthesis of the polyamines spermine and spermidine from the diamine putrescine. The polypeptide is S-adenosylmethionine decarboxylase proenzyme (Prochlorococcus marinus (strain MIT 9211)).